The following is a 521-amino-acid chain: Glucomannan 4-beta-mannosyltransferase 1 (521 aa).

Residues 22-42 (VIVPLLRLAVAVCLTMSVLLF) form a helical membrane-spanning segment. The active site involves Asp123. Substrate-binding residues include Asp182 and Asp184. Asp276 is an active-site residue. 4 helical membrane passes run 355–375 (IIAH…TIFV), 391–411 (IITL…FFWI), 471–491 (VTEL…LAFG), and 495–515 (FFIY…GYVG).

The protein belongs to the glycosyltransferase 2 family. Plant cellulose synthase-like A subfamily.

It is found in the golgi apparatus membrane. It carries out the reaction GDP-mannose + (glucomannan)n = GDP + (glucomannan)n+1.. Functionally, possesses glucomannan synthase and mannan synthase activities in vitro. Mannan synthase consists of a 4-beta-mannosyltransferase activity on mannan using GDP-mannose. The beta-1,4-mannan product is the backbone for galactomannan synthesis by galactomannan galactosyltransferase. Galactomannan is a noncellulosic polysaccharides of plant cell wall. The protein is Glucomannan 4-beta-mannosyltransferase 1 of Oryza sativa subsp. japonica (Rice).